We begin with the raw amino-acid sequence, 208 residues long: Uracil phosphoribosyltransferase (208 aa).

5-phospho-alpha-D-ribose 1-diphosphate contacts are provided by residues arginine 78, arginine 103, and 130–138 (DPMLATGGS). Uracil-binding positions include isoleucine 193 and 198–200 (GDA). 5-phospho-alpha-D-ribose 1-diphosphate is bound at residue aspartate 199.

The protein belongs to the UPRTase family. The cofactor is Mg(2+).

The enzyme catalyses UMP + diphosphate = 5-phospho-alpha-D-ribose 1-diphosphate + uracil. It functions in the pathway pyrimidine metabolism; UMP biosynthesis via salvage pathway; UMP from uracil: step 1/1. With respect to regulation, allosterically activated by GTP. Catalyzes the conversion of uracil and 5-phospho-alpha-D-ribose 1-diphosphate (PRPP) to UMP and diphosphate. This is Uracil phosphoribosyltransferase from Aeromonas salmonicida (strain A449).